We begin with the raw amino-acid sequence, 246 residues long: UPF0309 protein OB3413 (246 aa).

In terms of domain architecture, SIS spans 33 to 212; it reads MATAVMNGNS…VLKMIEIFEE (180 aa).

Belongs to the UPF0309 family.

The chain is UPF0309 protein OB3413 from Oceanobacillus iheyensis (strain DSM 14371 / CIP 107618 / JCM 11309 / KCTC 3954 / HTE831).